Reading from the N-terminus, the 340-residue chain is Anthranilate phosphoribosyltransferase (340 aa).

Residues G83, 86–87 (GD), T91, 93–96 (NIST), 111–119 (KHGNRSITS), and S123 contribute to the 5-phospho-alpha-D-ribose 1-diphosphate site. Residue G83 coordinates anthranilate. S95 contacts Mg(2+). Residue N114 participates in anthranilate binding. Position 169 (R169) interacts with anthranilate. Mg(2+) contacts are provided by D228 and E229.

This sequence belongs to the anthranilate phosphoribosyltransferase family. As to quaternary structure, homodimer. Requires Mg(2+) as cofactor.

The enzyme catalyses N-(5-phospho-beta-D-ribosyl)anthranilate + diphosphate = 5-phospho-alpha-D-ribose 1-diphosphate + anthranilate. Its pathway is amino-acid biosynthesis; L-tryptophan biosynthesis; L-tryptophan from chorismate: step 2/5. Functionally, catalyzes the transfer of the phosphoribosyl group of 5-phosphorylribose-1-pyrophosphate (PRPP) to anthranilate to yield N-(5'-phosphoribosyl)-anthranilate (PRA). The protein is Anthranilate phosphoribosyltransferase of Solibacter usitatus (strain Ellin6076).